Reading from the N-terminus, the 328-residue chain is Tetraacyldisaccharide 4'-kinase (328 aa).

55 to 62 (TAGGNGKT) contacts ATP.

The protein belongs to the LpxK family.

It catalyses the reaction a lipid A disaccharide + ATP = a lipid IVA + ADP + H(+). Its pathway is glycolipid biosynthesis; lipid IV(A) biosynthesis; lipid IV(A) from (3R)-3-hydroxytetradecanoyl-[acyl-carrier-protein] and UDP-N-acetyl-alpha-D-glucosamine: step 6/6. Transfers the gamma-phosphate of ATP to the 4'-position of a tetraacyldisaccharide 1-phosphate intermediate (termed DS-1-P) to form tetraacyldisaccharide 1,4'-bis-phosphate (lipid IVA). The protein is Tetraacyldisaccharide 4'-kinase of Escherichia coli O7:K1 (strain IAI39 / ExPEC).